The chain runs to 351 residues: Methylthioribose-1-phosphate isomerase (351 aa).

Substrate contacts are provided by residues arginine 51–alanine 53, arginine 94, and glutamine 199. The active-site Proton donor is the aspartate 240. Asparagine 250–lysine 251 is a binding site for substrate.

The protein belongs to the EIF-2B alpha/beta/delta subunits family. MtnA subfamily. As to quaternary structure, homodimer.

It carries out the reaction 5-(methylsulfanyl)-alpha-D-ribose 1-phosphate = 5-(methylsulfanyl)-D-ribulose 1-phosphate. It participates in amino-acid biosynthesis; L-methionine biosynthesis via salvage pathway; L-methionine from S-methyl-5-thio-alpha-D-ribose 1-phosphate: step 1/6. Catalyzes the interconversion of methylthioribose-1-phosphate (MTR-1-P) into methylthioribulose-1-phosphate (MTRu-1-P). The polypeptide is Methylthioribose-1-phosphate isomerase (Bacillus thuringiensis subsp. konkukian (strain 97-27)).